Here is a 344-residue protein sequence, read N- to C-terminus: MESSGSAACCPVLQQRARWERKRVCTARELLETERRYQEQLGLVATYFLRILKAKGTLRPPELQTLFGTWELIYAASLELLPYLEEGQWGLGLQGFCPHLELYAQFAANAERSQTTLQAQLKKNKRFRRFVKLQEGRPEFRGLQLQDLLPLPLQRLQQYENLVVALAENTVPNSPDYQQLTRAARLVSETAQKVHAIGQSQKNDQHLLRVQALLSGRKAKGLTSGRWFLRQGWLLVVPPTGEPRPRMFFLFSDVLLMAKPRPPLHLLKSGTFVCRALYPMSQCHLSRVFGHSGGPCGGLLSLSFPHEKLLLMSTDQEELSQWHHSLTLAIRSQKSSTHRSVTAT.

Positions 22–197 (KRVCTARELL…SETAQKVHAI (176 aa)) constitute a DH domain. In terms of domain architecture, PH spans 227–331 (WFLRQGWLLV…WHHSLTLAIR (105 aa)).

It is found in the cell membrane. Promotes cell proliferation. The protein is Rho guanine nucleotide exchange factor 39 (Arhgef39) of Mus musculus (Mouse).